Here is a 353-residue protein sequence, read N- to C-terminus: uncharacterized protein (353 aa).

The first 24 residues, 1 to 24, serve as a signal peptide directing secretion; it reads MRVVERAVIACYLGITIFSGIAFG.

Belongs to the chlamydial CPn_1058/CT_355/TC_0634 family.

This is an uncharacterized protein from Chlamydia trachomatis serovar D (strain ATCC VR-885 / DSM 19411 / UW-3/Cx).